The primary structure comprises 71 residues: Large ribosomal subunit protein uL29 (71 aa).

It belongs to the universal ribosomal protein uL29 family.

This Rickettsia akari (strain Hartford) protein is Large ribosomal subunit protein uL29.